We begin with the raw amino-acid sequence, 242 residues long: Glycerol-3-phosphate acyltransferase (242 aa).

A run of 6 helical transmembrane segments spans residues 7–27, 61–81, 102–122, 135–155, 162–182, and 201–221; these read ISLLVILSLLIGYLFGSIMFA, IAIGFFEIIKSVIPFSIILLI, YYLTYLAPLAAIFGHMYPVYF, GFVFVVSPWWFLIIALTWWTI, VSLASIVCFIIFLFLPYIPWL, and DWYIIVFFAIANTILSTIIIW.

The protein belongs to the PlsY family. As to quaternary structure, probably interacts with PlsX.

It is found in the cell membrane. It catalyses the reaction an acyl phosphate + sn-glycerol 3-phosphate = a 1-acyl-sn-glycero-3-phosphate + phosphate. Its pathway is lipid metabolism; phospholipid metabolism. Catalyzes the transfer of an acyl group from acyl-phosphate (acyl-PO(4)) to glycerol-3-phosphate (G3P) to form lysophosphatidic acid (LPA). This enzyme utilizes acyl-phosphate as fatty acyl donor, but not acyl-CoA or acyl-ACP. In Mycoplasmoides gallisepticum (strain R(low / passage 15 / clone 2)) (Mycoplasma gallisepticum), this protein is Glycerol-3-phosphate acyltransferase.